The following is a 658-amino-acid chain: Translation factor GUF1, mitochondrial (658 aa).

A mitochondrion-targeting transit peptide spans 1-40 (MRGCLQTVRWLTSAWQRPRSYSPLSRAAPCRFFNVSIPRN). Residues 60–240 (DRFRNFCIVA…TVVEQIPAPV (181 aa)) enclose the tr-type G domain. GTP is bound by residues 69 to 76 (AHVDHGKS), 133 to 137 (DTPGH), and 187 to 190 (NKVD).

It belongs to the TRAFAC class translation factor GTPase superfamily. Classic translation factor GTPase family. LepA subfamily.

The protein localises to the mitochondrion inner membrane. The enzyme catalyses GTP + H2O = GDP + phosphate + H(+). Promotes mitochondrial protein synthesis. May act as a fidelity factor of the translation reaction, by catalyzing a one-codon backward translocation of tRNAs on improperly translocated ribosomes. Binds to mitochondrial ribosomes in a GTP-dependent manner. This Paracoccidioides lutzii (strain ATCC MYA-826 / Pb01) (Paracoccidioides brasiliensis) protein is Translation factor GUF1, mitochondrial.